The primary structure comprises 469 residues: GTPase Der (469 aa).

EngA-type G domains follow at residues P30–A193 and R203–D376. GTP is bound by residues G36–S43, D83–W87, N145–D148, G209–S216, D256–L260, and N321–D324. In terms of domain architecture, KH-like spans T377–E459.

Belongs to the TRAFAC class TrmE-Era-EngA-EngB-Septin-like GTPase superfamily. EngA (Der) GTPase family. Associates with the 50S ribosomal subunit.

GTPase that plays an essential role in the late steps of ribosome biogenesis. The polypeptide is GTPase Der (Mycobacterium marinum (strain ATCC BAA-535 / M)).